A 388-amino-acid chain; its full sequence is MNDRFDLPSAPFDLEGPLAPYAAHSAQTRGRVHAEPPSTSRTEFQRDRDRIIHSTAFRRLEYKTQVFVNHEGDLFRTRLTHSLEVAQIARSIARSLRLNEDLVEAVSLAHDLGHTPFGHAGQDALNDCMKPYGGFEHNLQSLLVVDRLEERYGGFDGLNLTFETREGILKHCSRNNAATLGDLGRRFLEGQQPSLEAQLANLADEVAYNNHDIDDGLRSGLITLEQLEDVPLWAIHRREAEAAFPAVSGRRLINETIRRIINALIVDLIGTTRAGIAEFAPQCIDDVRAAPALVAFSEPMHEEARVLKRFLFDNLYRHYLVMRMSAKARRIIDDLFRVFMDDPRLLPPQYQAKSNPDEQPRWIAHYIAGMTDRYAIKEHRRIFAVDAV.

The disordered stretch occupies residues 24–44 (HSAQTRGRVHAEPPSTSRTEF). The HD domain occupies 78-209 (RLTHSLEVAQ…ANLADEVAYN (132 aa)).

This sequence belongs to the dGTPase family. Type 2 subfamily.

This chain is Deoxyguanosinetriphosphate triphosphohydrolase-like protein, found in Ralstonia pickettii (strain 12J).